Reading from the N-terminus, the 2768-residue chain is MALVLEIFTLLASICWVSANIFEYQVDAQPLRPCELQRETAFLKQADYVPQCAEDGSFQTVQCQNDGRSCWCVGANGSEVLGSRQPGRPVACLSFCQLQKQQILLSGYINSTDTSYLPQCQDSGDYAPVQCDVQQVQCWCVDAEGMEVYGTRQLGRPKRCPRSCEIRNRRLLHGVGDKSPPQCSAEGEFMPVQCKFVNTTDMMIFDLVHSYNRFPDAFVTFSSFQRRFPEVSGYCHCADSQGRELAETGLELLLDEIYDTIFAGLDLPSTFTETTLYRILQRRFLAVQSVISGRFRCPTKCEVERFTATSFGHPYVPSCRRNGDYQAVQCQTEGPCWCVDAQGKEMHGTRQQGEPPSCAEGQSCASERQQALSRLYFGTSGYFSQHDLFSSPEKRWASPRVARFATSCPPTIKELFVDSGLLRPMVEGQSQQFSVSENLLKEAIRAIFPSRGLARLALQFTTNPKRLQQNLFGGKFLVNVGQFNLSGALGTRGTFNFSQFFQQLGLASFLNGGRQEDLAKPLSVGLDSNSSTGTPEAAKKDGTMNKPTVGSFGFEINLQENQNALKFLASLLELPEFLLFLQHAISVPEDVARDLGDVMETVLSSQTCEQTPERLFVPSCTTEGSYEDVQCFSGECWCVNSWGKELPGSRVRGGQPRCPTDCEKQRARMQSLMGSQPAGSTLFVPACTSEGHFLPVQCFNSECYCVDAEGQAIPGTRSAIGKPKKCPTPCQLQSEQAFLRTVQALLSNSSMLPTLSDTYIPQCSTDGQWRQVQCNGPPEQVFELYQRWEAQNKGQDLTPAKLLVKIMSYREAASGNFSLFIQSLYEAGQQDVFPVLSQYPSLQDVPLAALEGKRPQPRENILLEPYLFWQILNGQLSQYPGSYSDFSTPLAHFDLRNCWCVDEAGQELEGMRSEPSKLPTCPGSCEEAKLRVLQFIRETEEIVSASNSSRFPLGESFLVAKGIRLRNEDLGLPPLFPPREAFAEQFLRGSDYAIRLAAQSTLSFYQRRRFSPDDSAGASALLRSGPYMPQCDAFGSWEPVQCHAGTGHCWCVDEKGGFIPGSLTARSLQIPQCPTTCEKSRTSGLLSSWKQARSQENPSPKDLFVPACLETGEYARLQASGAGTWCVDPASGEELRPGSSSSAQCPSLCNVLKSGVLSRRVSPGYVPACRAEDGGFSPVQCDQAQGSCWCVMDSGEEVPGTRVTGGQPACESPRCPLPFNASEVVGGTILCETISGPTGSAMQQCQLLCRQGSWSVFPPGPLICSLESGRWESQLPQPRACQRPQLWQTIQTQGHFQLQLPPGKMCSADYADLLQTFQVFILDELTARGFCQIQVKTFGTLVSIPVCNNSSVQVGCLTRERLGVNVTWKSRLEDIPVASLPDLHDIERALVGKDLLGRFTDLIQSGSFQLHLDSKTFPAETIRFLQGDHFGTSPRTWFGCSEGFYQVLTSEASQDGLGCVKCPEGSYSQDEECIPCPVGFYQEQAGSLACVPCPVGRTTISAGAFSQTHCVTDCQRNEAGLQCDQNGQYRASQKDRGSGKAFCVDGEGRRLPWWETEAPLEDSQCLMMQKFEKVPESKVIFDANAPVAVRSKVPDSEFPVMQCLTDCTEDEACSFFTVSTTEPEISCDFYAWTSDNVACMTSDQKRDALGNSKATSFGSLRCQVKVRSHGQDSPAVYLKKGQGSTTTLQKRFEPTGFQNMLSGLYNPIVFSASGANLTDAHLFCLLACDRDLCCDGFVLTQVQGGAIICGLLSSPSVLLCNVKDWMDPSEAWANATCPGVTYDQESHQVILRLGDQEFIKSLTPLEGTQDTFTNFQQVYLWKDSDMGSRPESMGCRKDTVPRPASPTEAGLTTELFSPVDLNQVIVNGNQSLSSQKHWLFKHLFSAQQANLWCLSRCVQEHSFCQLAEITESASLYFTCTLYPEAQVCDDIMESNAQGCRLILPQMPKALFRKKVILEDKVKNFYTRLPFQKLMGISIRNKVPMSEKSISNGFFECERRCDADPCCTGFGFLNVSQLKGGEVTCLTLNSLGIQMCSEENGGAWRILDCGSPDIEVHTYPFGWYQKPIAQNNAPSFCPLVVLPSLTEKVSLDSWQSLALSSVVVDPSIRHFDVAHVSTAATSNFSAVRDLCLSECSQHEACLITTLQTQPGAVRCMFYADTQSCTHSLQGQNCRLLLREEATHIYRKPGISLLSYEASVPSVPISTHGRLLGRSQAIQVGTSWKQVDQFLGVPYAAPPLAERRFQAPEPLNWTGSWDASKPRASCWQPGTRTSTSPGVSEDCLYLNVFIPQNVAPNASVLVFFHNTMDREESEGWPAIDGSFLAAVGNLIVVTASYRVGVFGFLSSGSGEVSGNWGLLDQVAALTWVQTHIRGFGGDPRRVSLAADRGGADVASIHLLTARATNSQLFRRAVLMGGSALSPAAVISHERAQQQAIALAKEVSCPMSSSQEVVSCLRQKPANVLNDAQTKLLAVSGPFHYWGPVIDGHFLREPPARALKRSLWVEVDLLIGSSQDDGLINRAKAVKQFEESRGRTSSKTAFYQALQNSLGGEDSDARVEAAATWYYSLEHSTDDYASFSRALENATRDYFIICPIIDMASAWAKRARGNVFMYHAPENYGHGSLELLADVQFALGLPFYPAYEGQFSLEEKSLSLKIMQYFSHFIRSGNPNYPYEFSRKVPTFATPWPDFVPRAGGENYKEFSELLPNRQGLKKADCSFWSKYISSLKTSADGAKGGQSAESEEEELTAGSGLREDLLSLQEPGSKTYSK.

Positions 1-19 are cleaved as a signal peptide; it reads MALVLEIFTLLASICWVSA. At Tyr24 the chain carries Iodotyrosine; alternate. Tyr24 is modified (sulfotyrosine; alternate). The residue at position 24 (Tyr24) is a Thyroxine; alternate. Residue Tyr24 is modified to Triiodothyronine; alternate. 4 consecutive Thyroglobulin type-1 domains span residues 31 to 92, 93 to 160, 161 to 297, and 298 to 358; these read LRPC…PVAC, LSFC…PKRC, PRSC…RFRC, and PTKC…PPSC. 18 disulfides stabilise this stretch: Cys34–Cys52, Cys63–Cys70, Cys72–Cys92, Cys96–Cys120, Cys131–Cys138, Cys140–Cys160, Cys164–Cys183, Cys194–Cys235, Cys237–Cys297, Cys301–Cys319, Cys330–Cys336, Cys338–Cys358, Cys364–Cys620, Cys408–Cys608, Cys631–Cys636, Cys638–Cys658, Cys662–Cys687, and Cys698–Cys703. Asn76 carries N-linked (GlcNAc...) asparagine glycosylation. Tyr108 carries the post-translational modification Iodotyrosine. N-linked (GlcNAc...) asparagine glycosylation occurs at Asn110. Iodotyrosine; alternate is present on Tyr149. Tyr149 bears the Diiodotyrosine; alternate mark. Asn198 is a glycosylation site (N-linked (GlcNAc...) asparagine). Tyr234 and Tyr258 each carry iodotyrosine. Residues Asn484 and Asn529 are each glycosylated (N-linked (GlcNAc...) asparagine). A disordered region spans residues 521–545; the sequence is PLSVGLDSNSSTGTPEAAKKDGTMN. Thyroglobulin type-1 domains lie at 605–658, 659–726, 727–921, 922–1073, 1074–1145, and 1146–1210; these read SQTC…QPRC, PTDC…PKKC, PTPC…LPTC, PGSC…IPQC, PTTC…SAQC, and PSLC…QPAC. Iodotyrosine; alternate is present on Tyr704. Tyr704 is modified (thyroxine; alternate). Tyr704 is modified (triiodothyronine; alternate). The residue at position 704 (Tyr704) is a Diiodotyrosine; alternate. Disulfide bonds link Cys705–Cys726, Cys730–Cys763, Cys774–Cys898, Cys900–Cys921, Cys925–Cys1031, Cys1042–Cys1049, Cys1051–Cys1073, Cys1077–Cys1108, Cys1126–Cys1145, Cys1149–Cys1169, Cys1181–Cys1188, Cys1190–Cys1210, Cys1215–Cys1264, Cys1231–Cys1245, Cys1306–Cys1356, and Cys1331–Cys1347. N-linked (GlcNAc...) asparagine glycosylation occurs at Asn748. Tyr785 is subject to Iodotyrosine. N-linked (GlcNAc...) asparagine glycosylation occurs at Asn816. Iodotyrosine; alternate is present on Tyr866. Diiodotyrosine; alternate is present on Tyr866. Tyr883 is modified (diiodotyrosine). N-linked (GlcNAc...) asparagine glycosylation is present at Asn947. Tyr992 is modified (iodotyrosine; alternate). Position 992 is a diiodotyrosine; alternate (Tyr992). Asn1220 carries an N-linked (GlcNAc...) asparagine glycan. Tyr1310 bears the Iodotyrosine mark. Tyr1310 is modified (thyroxine). N-linked (GlcNAc...) asparagine glycans are attached at residues Asn1348, Asn1349, and Asn1365. 9 cysteine pairs are disulfide-bonded: Cys1440–Cys1459, Cys1462–Cys1473, Cys1476–Cys1490, Cys1493–Cys1510, Cys1514–Cys1523, Cys1543–Cys1565, Cys1603–Cys1627, Cys1607–Cys1613, and Cys1639–Cys1662. Type II repeat units follow at residues 1456–1469, 1470–1486, and 1487–1503; these read GLGC…SYSQ, DEEC…EQAG, and SLAC…ISAG. An Iodotyrosine; alternate modification is found at Tyr1467. At Tyr1467 the chain carries Diiodotyrosine; alternate. The 55-residue stretch at 1511 to 1565 folds into the Thyroglobulin type-1 11 domain; sequence VTDCQRNEAGLQCDQNGQYRASQKDRGSGKAFCVDGEGRRLPWWETEAPLEDSQC. The Type IIIA repeat unit spans residues 1603–1723; sequence CLTDCTEDEA…GANLTDAHLF (121 aa). A glycan (N-linked (GlcNAc...) asparagine) is linked at Asn1716. Intrachain disulfides connect Cys1724-Cys1749, Cys1728-Cys1734, Cys1733-Cys1835, and Cys1760-Cys1777. One copy of the Type IIIB repeat lies at 1724–1892; it reads CLLACDRDLC…LFSAQQANLW (169 aa). Residues Asn1774 and Asn1869 are each glycosylated (N-linked (GlcNAc...) asparagine). 7 disulfides stabilise this stretch: Cys1893–Cys1919, Cys1897–Cys1904, Cys1928–Cys1939, Cys1996–Cys2024, Cys2000–Cys2006, Cys2005–Cys2076, and Cys2035–Cys2048. A Type IIIA repeat occupies 1893–1995; sequence CLSRCVQEHS…EKSISNGFFE (103 aa). Residues 1996 to 2129 form a Type IIIB repeat; the sequence is CERRCDADPC…TSNFSAVRDL (134 aa). Asn2013 is a glycosylation site (N-linked (GlcNAc...) asparagine). A glycan (N-linked (GlcNAc...) asparagine) is linked at Asn2122. 3 disulfide bridges follow: Cys2130–Cys2154, Cys2134–Cys2140, and Cys2163–Cys2172. The Type IIIA repeat unit spans residues 2130–2187; it reads CLSECSQHEACLITTLQTQPGAVRCMFYADTQSCTHSLQGQNCRLLLREEATHIYRKP. The residue at position 2184 (Tyr2184) is an Iodotyrosine. Positions 2188-2768 are cholinesterase-like (ChEL); it reads GISLLSYEAS…QEPGSKTYSK (581 aa). N-linked (GlcNAc...) asparagine glycosylation occurs at Asn2250. The cysteines at positions 2264 and 2281 are disulfide-linked. Asn2295 carries N-linked (GlcNAc...) asparagine glycosylation. Cys2442 and Cys2453 are disulfide-bonded. At Tyr2540 the chain carries Iodotyrosine. The residue at position 2573 (Tyr2573) is an Iodotyrosine; alternate. Tyr2573 carries the thyroxine; alternate modification. Position 2573 is a triiodothyronine; alternate (Tyr2573). Diiodotyrosine; alternate is present on Tyr2573. Asn2582 carries an N-linked (GlcNAc...) asparagine glycan. Tyr2587 and Tyr2617 each carry iodotyrosine. A disulfide bridge connects residues Cys2591 and Cys2715. Tyr2697 carries the diiodotyrosine modification. The tract at residues 2727–2768 is disordered; that stretch reads TSADGAKGGQSAESEEEELTAGSGLREDLLSLQEPGSKTYSK. An O-linked (Xyl...) (chondroitin sulfate) serine glycan is attached at Ser2749. Tyr2766 is subject to Iodotyrosine; alternate. Position 2766 is a thyroxine; alternate (Tyr2766). Triiodothyronine; alternate is present on Tyr2766. Position 2766 is a diiodotyrosine; alternate (Tyr2766).

The protein belongs to the type-B carboxylesterase/lipase family. In terms of assembly, monomer. Homodimer (via ChEL region); occurs in the endoplasmic reticulum and is required for export to the Golgi apparatus. Homooligomer; disulfide-linked; stored in this form in the thyroid follicle lumen. Post-translationally, iodinated on tyrosine residues by TPO. There are 4 pairs of iodinated tyrosines used for coupling: acceptor Tyr-24 is coupled to donor Tyr-149 or Tyr-234, acceptor Tyr-2573 is coupled to donor Tyr-2540, acceptor Tyr-2766 in monomer 1 is coupled to donor Tyr-2766 in monomer 2 and acceptor Tyr-1310 in monomer 1 is coupled to donor Tyr-108 in monomer 2. In terms of processing, sulfated tyrosines are desulfated during iodination. Undergoes sequential proteolysis by cathepsins to release thyroxine (T4) and triiodothyronine (T3) hormones. In the thyroid follicle lumen, cross-linked TG (storage form) is solubilized by limited proteolysis mediated by cathepsins CTSB and/or CTSL. Partially cleaved TG is further processed by CTSK/cathepsin K and/or CTSL resulting in the release of T4. Following endocytosis, further processing occurs leading to the release of T3 and more T4 hormones. Specifically expressed in the thyroid gland.

Its subcellular location is the secreted. In terms of biological role, acts as a substrate for the production of iodinated thyroid hormones thyroxine (T4) and triiodothyronine (T3). The synthesis of T3 and T4 involves iodination of selected tyrosine residues of TG/thyroglobulin followed by their oxidative coupling in the thyroid follicle lumen. Following TG re-internalization and lysosomal-mediated proteolysis, T3 and T4 are released from the polypeptide backbone leading to their secretion into the bloodstream. One dimer produces 7 thyroid hormone molecules. The polypeptide is Thyroglobulin (Homo sapiens (Human)).